The primary structure comprises 260 residues: Ribonuclease PH (260 aa).

Phosphate is bound by residues arginine 87 and 125–127 (GTR). A disordered region spans residues 232-260 (LAAPPAAGPPAPERAGAGSGSGGKGTGSR). The segment covering 248-260 (AGSGSGGKGTGSR) has biased composition (gly residues).

It belongs to the RNase PH family. Homohexameric ring arranged as a trimer of dimers.

The catalysed reaction is tRNA(n+1) + phosphate = tRNA(n) + a ribonucleoside 5'-diphosphate. Its function is as follows. Phosphorolytic 3'-5' exoribonuclease that plays an important role in tRNA 3'-end maturation. Removes nucleotide residues following the 3'-CCA terminus of tRNAs; can also add nucleotides to the ends of RNA molecules by using nucleoside diphosphates as substrates, but this may not be physiologically important. Probably plays a role in initiation of 16S rRNA degradation (leading to ribosome degradation) during starvation. This is Ribonuclease PH from Parafrankia sp. (strain EAN1pec).